We begin with the raw amino-acid sequence, 727 residues long: Beta-galactosidase 2 (727 aa).

The signal sequence occupies residues 1 to 27 (MSMHFRNKAWIILAILCFSSLIHSTEA). The active-site Proton donor is Glu-185. Glu-254 acts as the Nucleophile in catalysis. Asn-255 carries N-linked (GlcNAc...) asparagine glycosylation.

This sequence belongs to the glycosyl hydrolase 35 family. In terms of tissue distribution, ubiquitous, with higher expression levels in roots and siliques.

The protein resides in the secreted. It localises to the extracellular space. Its subcellular location is the apoplast. The enzyme catalyses Hydrolysis of terminal non-reducing beta-D-galactose residues in beta-D-galactosides.. This is Beta-galactosidase 2 (BGAL2) from Arabidopsis thaliana (Mouse-ear cress).